Here is a 339-residue protein sequence, read N- to C-terminus: Glyceraldehyde-3-phosphate dehydrogenase (339 aa).

Residues 11–12 and G110 contribute to the NAD(+) site; that span reads TI. 139–141 provides a ligand contact to D-glyceraldehyde 3-phosphate; sequence SCN. The active-site Nucleophile is the C140. R168 serves as a coordination point for NAD(+). Residue 194–195 participates in D-glyceraldehyde 3-phosphate binding; it reads HG. Residue Q301 coordinates NAD(+).

Belongs to the glyceraldehyde-3-phosphate dehydrogenase family. Homotetramer.

It localises to the cytoplasm. It carries out the reaction D-glyceraldehyde 3-phosphate + phosphate + NADP(+) = (2R)-3-phospho-glyceroyl phosphate + NADPH + H(+). The catalysed reaction is D-glyceraldehyde 3-phosphate + phosphate + NAD(+) = (2R)-3-phospho-glyceroyl phosphate + NADH + H(+). It participates in carbohydrate degradation; glycolysis; pyruvate from D-glyceraldehyde 3-phosphate: step 1/5. The protein is Glyceraldehyde-3-phosphate dehydrogenase of Methanospirillum hungatei JF-1 (strain ATCC 27890 / DSM 864 / NBRC 100397 / JF-1).